The primary structure comprises 205 residues: Dephospho-CoA kinase (205 aa).

In terms of domain architecture, DPCK spans 4–204; it reads VVGLTGGIAS…QYYLTLATQQ (201 aa). 12-17 is a binding site for ATP; that stretch reads ASGKTT.

Belongs to the CoaE family.

The protein resides in the cytoplasm. The catalysed reaction is 3'-dephospho-CoA + ATP = ADP + CoA + H(+). Its pathway is cofactor biosynthesis; coenzyme A biosynthesis; CoA from (R)-pantothenate: step 5/5. Its function is as follows. Catalyzes the phosphorylation of the 3'-hydroxyl group of dephosphocoenzyme A to form coenzyme A. This Haemophilus ducreyi (strain 35000HP / ATCC 700724) protein is Dephospho-CoA kinase.